We begin with the raw amino-acid sequence, 249 residues long: Ribonuclease PH (249 aa).

Residues arginine 90 and 128-130 (GTR) each bind phosphate.

Belongs to the RNase PH family. In terms of assembly, homohexameric ring arranged as a trimer of dimers.

The enzyme catalyses tRNA(n+1) + phosphate = tRNA(n) + a ribonucleoside 5'-diphosphate. In terms of biological role, phosphorolytic 3'-5' exoribonuclease that plays an important role in tRNA 3'-end maturation. Removes nucleotide residues following the 3'-CCA terminus of tRNAs; can also add nucleotides to the ends of RNA molecules by using nucleoside diphosphates as substrates, but this may not be physiologically important. Probably plays a role in initiation of 16S rRNA degradation (leading to ribosome degradation) during starvation. The polypeptide is Ribonuclease PH (Parasynechococcus marenigrum (strain WH8102)).